We begin with the raw amino-acid sequence, 216 residues long: Nucleoid occlusion factor SlmA (216 aa).

The interval 1 to 23 (MAEQLTLDSIEPEPEKQSAKIEK) is disordered. The segment covering 13–23 (EPEKQSAKIEK) has biased composition (basic and acidic residues). Positions 28 to 88 (ERRQQVLTVL…ALIENIESSL (61 aa)) constitute an HTH tetR-type domain. The segment at residues 51 to 70 (TTARLAKEVGVSEAALYRYF) is a DNA-binding region (H-T-H motif).

The protein belongs to the nucleoid occlusion factor SlmA family. In terms of assembly, homodimer. Interacts with FtsZ.

The protein localises to the cytoplasm. It localises to the nucleoid. Required for nucleoid occlusion (NO) phenomenon, which prevents Z-ring formation and cell division over the nucleoid. Acts as a DNA-associated cell division inhibitor that binds simultaneously chromosomal DNA and FtsZ, and disrupts the assembly of FtsZ polymers. SlmA-DNA-binding sequences (SBS) are dispersed on non-Ter regions of the chromosome, preventing FtsZ polymerization at these regions. This chain is Nucleoid occlusion factor SlmA, found in Mannheimia succiniciproducens (strain KCTC 0769BP / MBEL55E).